A 409-amino-acid chain; its full sequence is uncharacterized protein (409 aa).

The next 10 helical transmembrane spans lie at 62-82, 100-120, 123-143, 152-172, 183-203, 252-272, 293-313, 328-348, 355-375, and 376-396; these read FSLG…WVWI, LLLF…PEAF, MGLL…LFAL, ASFM…TFWI, VVLW…RYWV, GTPW…WIYF, AQYL…FTAV, YNFA…TMWM, VLPY…TLVP, and FVAN…VAVW.

Its subcellular location is the cell membrane. This is an uncharacterized protein from Rhizobium meliloti (strain 1021) (Ensifer meliloti).